Consider the following 141-residue polypeptide: Acetyltransferase ECA0875 (141 aa).

Residues 1–141 (MEIRIFRQDD…GKRLIEDREY (141 aa)) enclose the N-acetyltransferase domain.

This sequence belongs to the acetyltransferase family. YpeA subfamily.

The polypeptide is Acetyltransferase ECA0875 (Pectobacterium atrosepticum (strain SCRI 1043 / ATCC BAA-672) (Erwinia carotovora subsp. atroseptica)).